The following is a 262-amino-acid chain: Ornithine carbamoyltransferase (262 aa).

Residues 3 to 7 (STRTR), Q30, R54, and 81 to 84 (HPTQ) contribute to the carbamoyl phosphate site. Residues N114, D178, and 182–183 (SM) contribute to the L-ornithine site. Carbamoyl phosphate is bound by residues 219 to 222 (HCLP) and T247.

The protein belongs to the aspartate/ornithine carbamoyltransferase superfamily. OTCase family.

The protein resides in the cytoplasm. It carries out the reaction carbamoyl phosphate + L-ornithine = L-citrulline + phosphate + H(+). It functions in the pathway amino-acid biosynthesis; L-arginine biosynthesis; L-arginine from L-ornithine and carbamoyl phosphate: step 1/3. Its pathway is amino-acid degradation; L-arginine degradation via ADI pathway; carbamoyl phosphate from L-arginine: step 2/2. In terms of biological role, reversibly catalyzes the transfer of the carbamoyl group from carbamoyl phosphate (CP) to the N(epsilon) atom of ornithine (ORN) to produce L-citrulline. In Neisseria meningitidis, this protein is Ornithine carbamoyltransferase (argF).